The chain runs to 359 residues: Protein mab-21-like 2 (359 aa).

The protein belongs to the mab-21 family.

The protein resides in the nucleus. Its subcellular location is the cytoplasm. Required for several aspects of embryonic development including normal development of the eye. This is Protein mab-21-like 2 (mab21l2) from Xenopus tropicalis (Western clawed frog).